The primary structure comprises 170 residues: Viral interleukin-10 homolog (170 aa).

The signal sequence occupies residues 1–23 (MERRLVVTLQCLVLLYLAPECGG). Intrachain disulfides connect C27-C119 and C73-C125. Residues 97-145 (EAKDHVNSLGENLKTLRLRLRRCHRFLPCENKSKAVEQIKNAFNKLQEK) are a coiled coil. N127 carries N-linked (GlcNAc...) asparagine; by host glycosylation.

Belongs to the IL-10 family. Homodimer.

The protein resides in the secreted. Its function is as follows. Inhibits IFN-gamma synthesis. Down-regulates the expression of the host TAP1 gene (transporter associated with antigen processing), thereby affecting the transport of peptides into the endoplasmic reticulum and subsequent peptide loading by MHC class I molecules. In consequence, infected cells are masked for immune recognition by cytotoxic T-lymphocytes. The protein is Viral interleukin-10 homolog of Epstein-Barr virus (strain AG876) (HHV-4).